Reading from the N-terminus, the 357-residue chain is Nicotinate-nucleotide--dimethylbenzimidazole phosphoribosyltransferase (357 aa).

The Proton acceptor role is filled by glutamate 323.

It belongs to the CobT family.

It carries out the reaction 5,6-dimethylbenzimidazole + nicotinate beta-D-ribonucleotide = alpha-ribazole 5'-phosphate + nicotinate + H(+). It participates in nucleoside biosynthesis; alpha-ribazole biosynthesis; alpha-ribazole from 5,6-dimethylbenzimidazole: step 1/2. Its function is as follows. Catalyzes the synthesis of alpha-ribazole-5'-phosphate from nicotinate mononucleotide (NAMN) and 5,6-dimethylbenzimidazole (DMB). This chain is Nicotinate-nucleotide--dimethylbenzimidazole phosphoribosyltransferase, found in Nitratidesulfovibrio vulgaris (strain DP4) (Desulfovibrio vulgaris).